The sequence spans 296 residues: Hca operon transcriptional activator HcaR (296 aa).

In terms of domain architecture, HTH lysR-type spans 1 to 58; it reads MELRHLRYFVAVAQALNFTRAAEKLHTSQPSLSSQIRDLENCVGVPLLVRDKRKVALT. The segment at residues 18 to 38 is a DNA-binding region (H-T-H motif); it reads FTRAAEKLHTSQPSLSSQIRD.

The protein belongs to the LysR transcriptional regulatory family.

In terms of biological role, transcriptional activator of the hca operon for 3-phenylpropionic acid catabolism. This chain is Hca operon transcriptional activator HcaR (hcaR), found in Escherichia coli (strain K12).